We begin with the raw amino-acid sequence, 513 residues long: Sphingolipid C9-methyltransferase (513 aa).

Helical transmembrane passes span 52–72 (ILFSILALVPGYITYKLGLGF) and 74–94 (TWVFFFLILAIPILMAYWSIM). Residues 222–223 (YT), 259–267 (VLDIGCGWG), 285–290 (TLGRNQ), and 315–316 (YR) each bind S-adenosyl-L-methionine.

It belongs to the CFA/CMAS family.

Its subcellular location is the membrane. It carries out the reaction a (4E,8E)-4-sphinga-4,8-dienine ceramide + S-adenosyl-L-methionine = a 9-methyl-(4E,8E)-sphinga-4,8-dienine ceramide + S-adenosyl-L-homocysteine + H(+). Its pathway is lipid metabolism; sphingolipid metabolism. In terms of biological role, catalyzes methylation of the sphingoid base component of glucosylceramides (GluCers) at the C9-position. Sphingolipid C9-methylation requires 4,8-desaturated ceramides as substrates. Glucosylceramides play important roles in growth, differentiation and pathogenicity. The methyl group at the C9-position distinguishes fungal glucosylceramides from those of plants and animals, and may thus play a role in host-pathogen interactions enabling the host to recognize the fungal attack and initiate specific defense responses. Not necessary for vegetative growth at low temperatures, but plays a role in hyphal formation on solid medium. The chain is Sphingolipid C9-methyltransferase from Candida albicans (strain SC5314 / ATCC MYA-2876) (Yeast).